The sequence spans 466 residues: DNA polymerase delta subunit 3 (466 aa).

An N-acetylalanine modification is found at Ala-2. Disordered regions lie at residues 169–188 and 199–232; these read NNEL…VSQQ and KAAA…PGKG. Positions 206–217 are enriched in basic and acidic residues; it reads ETNKETKTEAKE. A Glycyl lysine isopeptide (Lys-Gly) (interchain with G-Cter in SUMO); alternate cross-link involves residue Lys-258. Lys-258 participates in a covalent cross-link: Glycyl lysine isopeptide (Lys-Gly) (interchain with G-Cter in SUMO2); alternate. Lys-261 is covalently cross-linked (Glycyl lysine isopeptide (Lys-Gly) (interchain with G-Cter in SUMO2)). Disordered regions lie at residues 274–393 and 406–466; these read KLAT…KTYL and ESES…FQRK. Thr-277 bears the Phosphothreonine mark. Residues 286 to 296 show a composition bias toward basic and acidic residues; sequence KKAEPVKVLQK. Ser-307 is modified (phosphoserine). The segment covering 349–361 has biased composition (pro residues); the sequence is PSPPPPPSPPLEP. Residues Ser-407 and Ser-409 each carry the phosphoserine modification. A Phosphothreonine modification is found at Thr-411. Phosphoserine is present on Ser-413. A compositionally biased stretch (basic and acidic residues) spans 432 to 441; it reads VKKEPREERK. Lys-433 is covalently cross-linked (Glycyl lysine isopeptide (Lys-Gly) (interchain with G-Cter in SUMO); alternate). Lys-433 participates in a covalent cross-link: Glycyl lysine isopeptide (Lys-Gly) (interchain with G-Cter in SUMO2); alternate. Residues 455–466 are compositionally biased toward polar residues; it reads RQVSITGFFQRK. A PIP-box motif is present at residues 456–463; the sequence is QVSITGFF. Ser-458 carries the phosphoserine modification.

Component of both the DNA polymerase delta and DNA polymerase zeta complexes. The tetrameric DNA polymerase delta complex (Pol-delta4), which consists of POLD1/p125, POLD2/p50, POLD3/p66/p68 and POLD4/p12, with POLD1 bearing DNA polymerase and 3' to 5' proofreading exonuclease activities. Within this complex, directly interacts with POLD2. Following stress caused by DNA damaging agents or by replication stress, POLD4 is degraded and Pol-delta4 is converted into a trimeric form of the complex (Pol-delta3), which consists of POLD1, POLD2 and POLD3. Pol-delta3 is the major form occurring at S phase replication sites, as well as DNA damage sites. Directly interacts with PCNA, as do POLD1 and POLD4; this interaction stimulates Pol-delta polymerase activity. POLD3 phosphorylation at Ser-458 impairs PCNA binding. Component of the DNA polymerase zeta complex (POLZ), which consists of REV3L, MAD2L2, POLD2 and POLD3, with REV3L bearing DNA polymerase catalytic activity. The DNA polymerase delta complex interacts with POLDIP2; this interaction is probably mediated through direct binding to POLD2. Ubiquitinated, but not targeted to the proteasome. Sumoylated. Sumoylation with SUMO3 may be predominant. In terms of processing, phosphorylation at Ser-458 is catalyzed in vitro by PKA. It is thought to decrease the affinity for PCNA and Pol-delta4 processivity. Can also be phosphorylated in vitro by CDK1-cyclin-A complex, as well as CDK2-cyclin-A and CDK2-cyclin-E complexes. PCNA interferes with CDK-cyclin phosphorylation.

It localises to the cytoplasm. The protein localises to the nucleus. Accessory component of both the DNA polymerase delta complex and the DNA polymerase zeta complex. As a component of the trimeric and tetrameric DNA polymerase delta complexes (Pol-delta3 and Pol-delta4, respectively), plays a role in high fidelity genome replication, including in lagging strand synthesis, and repair. Required for optimal Pol-delta activity. Stabilizes the Pol-delta complex and plays a major role in Pol-delta stimulation by PCNA. Pol-delta3 and Pol-delta4 are characterized by the absence or the presence of POLD4. They exhibit differences in catalytic activity. Most notably, Pol-delta3 shows higher proofreading activity than Pol-delta4. Although both Pol-delta3 and Pol-delta4 process Okazaki fragments in vitro, Pol-delta3 may also be better suited to fulfill this task, exhibiting near-absence of strand displacement activity compared to Pol-delta4 and stalling on encounter with the 5'-blocking oligonucleotides. Pol-delta3 idling process may avoid the formation of a gap, while maintaining a nick that can be readily ligated. Along with DNA polymerase kappa, DNA polymerase delta carries out approximately half of nucleotide excision repair (NER) synthesis following UV irradiation. In this context, POLD3, along with PCNA and RFC1-replication factor C complex, is required to recruit POLD1, the catalytic subunit of the polymerase delta complex, to DNA damage sites. Under conditions of DNA replication stress, required for the repair of broken replication forks through break-induced replication (BIR). Involved in the translesion synthesis (TLS) of templates carrying O6-methylguanine or abasic sites performed by Pol-delta4, independently of DNA polymerase zeta (REV3L) or eta (POLH). Facilitates abasic site bypass by DNA polymerase delta by promoting extension from the nucleotide inserted opposite the lesion. Also involved in TLS, as a component of the tetrameric DNA polymerase zeta complex. Along with POLD2, dramatically increases the efficiency and processivity of DNA synthesis of the DNA polymerase zeta complex compared to the minimal zeta complex, consisting of only REV3L and REV7. This chain is DNA polymerase delta subunit 3 (POLD3), found in Homo sapiens (Human).